Consider the following 373-residue polypeptide: tRNA-specific 2-thiouridylase MnmA (373 aa).

Residues 12 to 19 and Met-38 contribute to the ATP site; that span reads GMSGGVDS. The tract at residues 98 to 100 is interaction with target base in tRNA; it reads NPD. Cys-103 (nucleophile) is an active-site residue. Cys-103 and Cys-200 are joined by a disulfide. Residue Gly-127 participates in ATP binding. The interaction with tRNA stretch occupies residues 150–152; it reads KDQ. The active-site Cysteine persulfide intermediate is Cys-200. Residues 312 to 313 form an interaction with tRNA region; the sequence is RY.

The protein belongs to the MnmA/TRMU family.

It is found in the cytoplasm. It carries out the reaction S-sulfanyl-L-cysteinyl-[protein] + uridine(34) in tRNA + AH2 + ATP = 2-thiouridine(34) in tRNA + L-cysteinyl-[protein] + A + AMP + diphosphate + H(+). Catalyzes the 2-thiolation of uridine at the wobble position (U34) of tRNA, leading to the formation of s(2)U34. This is tRNA-specific 2-thiouridylase MnmA from Streptococcus mutans serotype c (strain ATCC 700610 / UA159).